Here is a 120-residue protein sequence, read N- to C-terminus: Putative membrane protein insertion efficiency factor (120 aa).

The segment at 93–120 (GRSCQTDVDGANDDWNPASKRGERESFV) is disordered.

Belongs to the UPF0161 family.

It is found in the cell membrane. In terms of biological role, could be involved in insertion of integral membrane proteins into the membrane. The sequence is that of Putative membrane protein insertion efficiency factor from Mycobacterium bovis (strain ATCC BAA-935 / AF2122/97).